Reading from the N-terminus, the 324-residue chain is Integrin-binding sialoprotein (324 aa).

The signal sequence occupies residues 1–16; it reads MKTALILLSILGMACA. A phosphoserine mark is found at Ser31, Ser67, Ser75, Ser76, and Ser95. 2 disordered regions span residues 60-228 and 243-263; these read VQGG…GREL and QQTT…RKSS. Acidic residues predominate over residues 66–105; sequence SSEENGDGDSSEEEGEEEETSNEEENNEDSEGNEDQEAEA. A compositionally biased stretch (polar residues) spans 106 to 130; the sequence is ENSTLSTLSGVTASYGAETTPQAQT. N-linked (GlcNAc...) asparagine glycosylation is present at Asn107. The segment covering 141–154 has biased composition (basic and acidic residues); that stretch reads KAGDAESRAPKVKE. Ser155 carries the post-translational modification Phosphoserine. Residues 155-179 show a composition bias toward acidic residues; sequence SDEEEEEEEEEEENENEEAEVDENE. Residues Asn183, Asn188, and Asn196 are each glycosylated (N-linked (GlcNAc...) asparagine). Positions 203-213 are enriched in acidic residues; the sequence is NGEEAEAEEAS. Over residues 253–263 the composition is skewed to polar residues; that stretch reads GTTSPPIRKSS. The Integrin-binding motif signature appears at 293–295; the sequence is RGD. 2 positions are modified to sulfotyrosine: Tyr320 and Tyr321.

Monomer. Interacts with integrins; the interaction promotes cell adhesion.

It localises to the secreted. In terms of biological role, binds tightly to hydroxyapatite. Appears to form an integral part of the mineralized matrix. Probably important to cell-matrix interaction. Promotes adhesion and migration of various cells via the alpha-V/beta-3 integrin receptor (ITGAV:ITGB3). In Mus musculus (Mouse), this protein is Integrin-binding sialoprotein (Ibsp).